The chain runs to 220 residues: Cysteine-rich venom protein (220 aa).

In terms of domain architecture, SCP spans 20-147; sequence DLHNSLRRSV…AYKYFYVCQY (128 aa). Intrachain disulfides connect Cys56–Cys134, Cys73–Cys148, Cys129–Cys145, Cys167–Cys174, Cys170–Cys179, Cys183–Cys215, Cys192–Cys209, and Cys200–Cys213. The ShKT domain maps to 183–215; that stretch reads CTREDEFINCNDLVKQGCQTDYLKSNCAASCFC.

As to expression, expressed by the venom gland.

The protein resides in the secreted. Blocks contraction of smooth muscle elicited by high potassium-induced depolarization, but does not block caffeine-stimulated contraction. May target voltage-gated calcium channels in smooth muscle. In Echis coloratus (Carpet viper), this protein is Cysteine-rich venom protein.